Here is a 599-residue protein sequence, read N- to C-terminus: Nucleoporin p58/p45 (599 aa).

A run of 5 repeats spans residues 7–8 (FG), 30–31 (FG), 44–45 (FG), 63–64 (FG), and 68–69 (FG). Positions 7 to 579 (FGSGTLGSTT…VSNPASAGFG (573 aa)) are 14 X 2 AA repeats of F-G. Positions 213 to 247 (NEGLGGIDFSSSSDKKSDKTGTRPEDSKALKDENL) are disordered. The segment covering 225–246 (SDKKSDKTGTRPEDSKALKDEN) has biased composition (basic and acidic residues). Coiled-coil stretches lie at residues 256–276 (ENLQKFVKEQKQVQEEISRMS) and 314–381 (ETAQ…SHIT). The residue at position 331 (T331) is a Phosphothreonine. A run of 9 repeats spans residues 488-489 (FG), 492-493 (FG), 513-514 (FG), 519-520 (FG), 529-530 (FG), 531-532 (FG), 545-546 (FG), 568-569 (FG), and 578-579 (FG). Positions 579 to 599 (GTGGQLLQLKKPPAGNKRGKR) are disordered.

The protein belongs to the NUP58 family. Component of the p62 complex, a complex at least composed of NUP62, NUP54, and NUP58. Interacts with NUTF2. Interacts with SRP1-alpha and Importin p97 proteins when they are together, but not with SRP1-alpha protein alone. Post-translationally, O-glycosylated.

The protein resides in the nucleus. It localises to the nuclear pore complex. The protein localises to the nucleus membrane. In terms of biological role, component of the nuclear pore complex, a complex required for the trafficking across the nuclear membrane. The polypeptide is Nucleoporin p58/p45 (Homo sapiens (Human)).